The primary structure comprises 323 residues: Probable inactive poly [ADP-ribose] polymerase SRO2 (323 aa).

A PARP catalytic domain is found at 31-257; it reads SSVSHAGSSF…FASRPSSPWV (227 aa). The region spanning 250–321 is the RST domain; the sequence is SRPSSPWVSF…IKNHKNRNKV (72 aa).

As to quaternary structure, interacts with STO.

Its subcellular location is the nucleus. Probable inactive ADP-ribosyltransferase that may be involved in stress and developmental responses. This is Probable inactive poly [ADP-ribose] polymerase SRO2 (SRO2) from Arabidopsis thaliana (Mouse-ear cress).